The chain runs to 1155 residues: MLQQYTLLLIYLSVATAKTITGVFNSFNSLTWSNAATYNYKGPGTPTWNAVLGWSLDGTSASPGDTFTLNMPCVFKFTTSQTSVDLTAHGVKYATCQFQAGEEFMTFSTLTCTVSNTLTPSIKALGTVTLPLAFNVGGTGSSVDLEDSKCFTAGTNTVTFNDGGKKISINVDFERSNVDPKGYLTDSRVIPSLNKVSTLFVAPQCANGYTSGTMGFANTYGDVQIDCSNIHVGITKGLNDWNYPVSSESFSYTKTCSSNGIFITYKNVPAGYRPFVDAYISATDVNSYTLSYANEYTCAGGYWQRAPFTLRWTGYRNSDAGSNGIVIVATTRTVTDSTTAVTTLPFDPNRDKTKTIEILKPIPTTTITTSYVGVTTSYSTKTAPIGETATVIVDIPYHTTTTVTSKWTGTITSTTTHTNPTDSIDTVIVQVPSPNPTVTTTEYWSQSFATTTTITGPPGNTDTVLIREPPNHTVTTTEYWSESYTTTSTFTAPPGGTDSVIIKEPPNPTVTTTEYWSESYTTTTTVTAPPGGTDTVIIREPPNHTVTTTEYWSQSYTTTTTVIAPPGGTDSVIIREPPNPTVTTTEYWSQSYATTTTITAPPGETDTVLIREPPNHTVTTTEYWSQSYATTTTITAPPGETDTVLIREPPNHTVTTTEYWSQSYTTTTTVIAPPGGTDSVIIKEPPNPTVTTTEYWSQSYATTTTITAPPGETDTVLIREPPNHTVTTTEYWSQSYATTTTITAPPGETDTVLIREPPNHTVTTTEYWSQSFATTTTVTAPPGGTDTVIIREPPNHTVTTTEYWSQSFATTTTIIAPPGETDTVLIREPPNPTVTTTEYWSQSYTTATTVTAPPGGTDTVIIYDTMSSSEISSFSRPHYTNHTTLWSTTWVIETKTITETSCEGDKGCSWVSVSTRIVTIPNNIETPMVTNTVDTTTTESTLQSPSGIFSESGVSVETESSTFTTAQTNPSVPTTESEVVFTTKGNNGNGPYESPSTNVKSSMDENSEFTTSTAASTSTDIENETIATTGSVEASSPIISSSADETTTVTTTAESTSVIEQQTNNNGGGNAPSATSTSSPSTTTTANSDSVITSTTSTNQSQSQSNSDTQQTTLSQQMTSSLVSLHMLTTFDGSGSVIQHSTWLCGLITLLSLFI.

An N-terminal signal peptide occupies residues 1 to 17 (MLQQYTLLLIYLSVATA). 4 cysteine pairs are disulfide-bonded: cysteine 73–cysteine 150, cysteine 96–cysteine 112, cysteine 205–cysteine 298, and cysteine 227–cysteine 256. ALS repeat units follow at residues 365 to 396 (TTITTSYVGVTTSYSTKTAPIGETATVIVDIP), 401 to 432 (TTVTSKWTGTITSTTTHTNPTDSIDTVIVQVP), and 438 to 469 (VTTTEYWSQSFATTTTITGPPGNTDTVLIREP). Asparagine 471 is a glycosylation site (N-linked (GlcNAc...) asparagine). 2 ALS repeats span residues 474–505 (VTTTEYWSESYTTTSTFTAPPGGTDSVIIKEP) and 510–541 (VTTTEYWSESYTTTTTVTAPPGGTDTVIIREP). Residue asparagine 543 is glycosylated (N-linked (GlcNAc...) asparagine). ALS repeat units lie at residues 546 to 577 (VTTTEYWSQSYTTTTTVIAPPGGTDSVIIREP) and 582 to 613 (VTTTEYWSQSYATTTTITAPPGETDTVLIREP). The N-linked (GlcNAc...) asparagine glycan is linked to asparagine 615. Residues 618-649 (VTTTEYWSQSYATTTTITAPPGETDTVLIREP) form an ALS 8 repeat. The N-linked (GlcNAc...) asparagine glycan is linked to asparagine 651. ALS repeat units lie at residues 654–685 (VTTTEYWSQSYTTTTTVIAPPGGTDSVIIKEP) and 690–721 (VTTTEYWSQSYATTTTITAPPGETDTVLIREP). Asparagine 723 carries N-linked (GlcNAc...) asparagine glycosylation. The ALS 11 repeat unit spans residues 726 to 757 (VTTTEYWSQSYATTTTITAPPGETDTVLIREP). N-linked (GlcNAc...) asparagine glycosylation is present at asparagine 759. The ALS 12 repeat unit spans residues 762-793 (VTTTEYWSQSFATTTTVTAPPGGTDTVIIREP). Residue asparagine 795 is glycosylated (N-linked (GlcNAc...) asparagine). ALS repeat units follow at residues 798–829 (VTTTEYWSQSFATTTTIIAPPGETDTVLIREP) and 834–863 (VTTTEYWSQSYTTATTVTAPPGGTDTVIIY). Asparagine 881 is a glycosylation site (N-linked (GlcNAc...) asparagine). The interval 936 to 1115 (TTTESTLQSP…NSDTQQTTLS (180 aa)) is disordered. The segment covering 949 to 965 (FSESGVSVETESSTFTT) has biased composition (low complexity). The span at 966–977 (AQTNPSVPTTES) shows a compositional bias: polar residues. Residues 1010 to 1019 (TTSTAASTST) are compositionally biased toward low complexity. A glycan (N-linked (GlcNAc...) asparagine) is linked at asparagine 1023. 2 stretches are compositionally biased toward low complexity: residues 1034-1058 (ASSPIISSSADETTTVTTTAESTSV) and 1071-1115 (APSA…TTLS). An N-linked (GlcNAc...) asparagine glycan is attached at asparagine 1099. Serine 1134 carries GPI-anchor amidated serine lipidation. Residues 1135–1155 (GSVIQHSTWLCGLITLLSLFI) constitute a propeptide, removed in mature form.

This sequence belongs to the ALS family. The GPI-anchor is attached to the protein in the endoplasmic reticulum and serves to target the protein to the cell surface. There, the glucosamine-inositol phospholipid moiety is cleaved off and the GPI-modified mannoprotein is covalently attached via its lipidless GPI glycan remnant to the 1,6-beta-glucan of the outer cell wall layer.

It is found in the cell membrane. The protein localises to the secreted. Its subcellular location is the cell wall. Its function is as follows. Cell surface adhesion protein which mediates both yeast-to-host tissue adherence and yeast aggregation. Plays an important role in the biofilm formation and pathogenesis of C.albicans infections. Necessary for C.albicans to bind to N-cadherin on endothelial cells and E-cadherin on oral epithelial cells and subsequent endocytosis by these cells. During disseminated infection, mediates initial trafficking to the brain and renal cortex and contributes to fungal persistence in the kidneys. The polypeptide is Agglutinin-like protein 3 (ALS3) (Candida albicans (strain SC5314 / ATCC MYA-2876) (Yeast)).